Consider the following 618-residue polypeptide: Zinc finger protein 48 (618 aa).

Residue Met1 is modified to N-acetylmethionine. Composition is skewed to basic and acidic residues over residues 1–22 (MERA…EPQR) and 39–51 (EFEH…DLGF). 2 disordered regions span residues 1–51 (MERA…DLGF) and 78–109 (LWVQ…ASSD). Lys87 participates in a covalent cross-link: Glycyl lysine isopeptide (Lys-Gly) (interchain with G-Cter in SUMO2). 2 C2H2-type zinc fingers span residues 112 to 134 (AVCG…QRTH) and 140 to 162 (YKCG…QRTH). The tract at residues 157-189 (KHQRTHSGEKPYRARPPAQGPPKIPRSRIPAGE) is disordered. A Glycyl lysine isopeptide (Lys-Gly) (interchain with G-Cter in SUMO2) cross-link involves residue Lys179. 2 C2H2-type zinc fingers span residues 192-214 (TICG…QRTH) and 220-242 (YKCG…QRTH). A disordered region spans residues 235-271 (RIKHQRTHRGEQPPRPVVPRRQPSRAATAATQGPKAQ). Residue Lys269 forms a Glycyl lysine isopeptide (Lys-Gly) (interchain with G-Cter in SUMO2) linkage. 2 consecutive C2H2-type zinc fingers follow at residues 275–297 (YICT…QRSH) and 303–325 (FGCD…LRVH). A Glycyl lysine isopeptide (Lys-Gly) (interchain with G-Cter in SUMO2) cross-link involves residue Lys329. C2H2-type zinc fingers lie at residues 331-353 (YLCP…LRTH) and 359-381 (HACP…RLTH). The segment covering 392-414 (YPLPALIPSPPPPPLGTSPPLTP) has biased composition (pro residues). The tract at residues 392–457 (YPLPALIPSP…DKPHKCPECG (66 aa)) is disordered. Residues 415–432 (RSPSHSGEPFGLPGLEPE) show a composition bias toward low complexity. The C2H2-type 9 zinc finger occupies 451–473 (HKCPECGKGFRRSSDLVKHHRVH). Residue Lys477 forms a Glycyl lysine isopeptide (Lys-Gly) (interchain with G-Cter in SUMO2) linkage. The C2H2-type 10 zinc finger occupies 479–501 (YLCPECGKGFADSSARVKHLRTH). The segment at 500 to 540 (THRGERARPPPPSTLLRPHNPPGPVPMAPRPRVRAQPSGPS) is disordered. The span at 508–528 (PPPPSTLLRPHNPPGPVPMAP) shows a compositional bias: pro residues. C2H2-type zinc fingers lie at residues 543-565 (HVCG…RRTH) and 571-593 (YKCA…QRGH). Lys610 participates in a covalent cross-link: Glycyl lysine isopeptide (Lys-Gly) (interchain with G-Cter in SUMO2).

It belongs to the krueppel C2H2-type zinc-finger protein family.

It localises to the nucleus. May be involved in transcriptional regulation. The sequence is that of Zinc finger protein 48 (ZNF48) from Homo sapiens (Human).